Here is a 482-residue protein sequence, read N- to C-terminus: uncharacterized protein (482 aa).

Residues 231–459 form the AB hydrolase-1 domain; it reads FEGNAGFYEI…FDACNHYLID (229 aa).

This is an uncharacterized protein from Caenorhabditis elegans.